Reading from the N-terminus, the 249-residue chain is Acidic leucine-rich nuclear phosphoprotein 32 family member A (249 aa).

At Thr-15 the chain carries Phosphothreonine. Ser-17 carries the post-translational modification Phosphoserine. LRR repeat units follow at residues 18-38 (DVKELVLDNCRSNEGKIEGLT), 43-64 (ELEFLSTINVGLTSVANLPKLN), 65-87 (KLKKLELSDNRISGGLEVLAEKC), and 89-110 (NLTHLNLSGNKIKDLSTIEPLK). The LRRCT domain occupies 123–161 (CEVTNLNDYRENVFKLLPQLTYLDGYDRDDKEAPDSDAE). Basic and acidic residues predominate over residues 147–156 (GYDRDDKEAP). The interval 147 to 249 (GYDRDDKEAP…EPEDEGEDDD (103 aa)) is disordered. Residues 150–174 (RDDKEAPDSDAEGYVEGLDDDEEDE) are necessary for tumor-suppressive function. Over residues 157–230 (DSDAEGYVEG…DEEDEEELGE (74 aa)) the composition is skewed to acidic residues. Phosphoserine occurs at positions 158 and 204. Residues 165-249 (EGLDDDEEDE…EPEDEGEDDD (85 aa)) are interaction with E4F1.

The protein belongs to the ANP32 family. Component of the SET complex, composed of at least ANP32A, APEX1, HMGB2, NME1, SET and TREX1. Directly interacts with SET. Interacts with ATXN1/SCA1. Interacts with MAP1B. Interacts with ELAVL1. Part of the INHAT (inhibitor of histone acetyltransferases) complex. Interacts with E4F1. The N-terminus is blocked. In terms of processing, phosphorylated on serine residues, at least in part by casein kinase 2/CK2. Post-translationally, some glutamate residues are glycylated by TTLL8. This modification occurs exclusively on glutamate residues and results in a glycine chain on the gamma-carboxyl group. In terms of tissue distribution, widely distributed in the central nervous system, with an abundant expression in the cerebellum.

The protein resides in the nucleus. It localises to the cytoplasm. The protein localises to the endoplasmic reticulum. Its function is as follows. Multifunctional protein that is involved in the regulation of many processes including tumor suppression, apoptosis, cell cycle progression or transcription. Promotes apoptosis by favouring the activation of caspase-9/CASP9 and allowing apoptosome formation. In addition, plays a role in the modulation of histone acetylation and transcription as part of the INHAT (inhibitor of histone acetyltransferases) complex. Inhibits the histone-acetyltranferase activity of EP300/CREBBP (CREB-binding protein) and EP300/CREBBP-associated factor by histone masking. Preferentially binds to unmodified histone H3 and sterically inhibiting its acetylation and phosphorylation leading to cell growth inhibition. Participates in other biochemical processes such as regulation of mRNA nuclear-to-cytoplasmic translocation and stability by its association with ELAVL1 (Hu-antigen R). Plays a role in E4F1-mediated transcriptional repression as well as inhibition of protein phosphatase 2A. The protein is Acidic leucine-rich nuclear phosphoprotein 32 family member A (ANP32A) of Bos taurus (Bovine).